The chain runs to 598 residues: Membrane protein insertase YidC (598 aa).

The helical transmembrane segment at 7–27 (NYFIAIALSVLIVLGWQFLYM) threads the bilayer. The interval 37–71 (AQEAQKAQQQTEQVQQPAAGGATPAPASGTAPSGQ) is disordered. Residues 40–71 (AQKAQQQTEQVQQPAAGGATPAPASGTAPSGQ) are compositionally biased toward low complexity. A run of 4 helical transmembrane segments spans residues 373 to 393 (FFGN…ALFF), 447 to 467 (WPVA…YITI), 492 to 512 (LFGL…WPLI), and 538 to 558 (WMPL…VIYW).

The protein belongs to the OXA1/ALB3/YidC family. Type 1 subfamily. In terms of assembly, interacts with the Sec translocase complex via SecD. Specifically interacts with transmembrane segments of nascent integral membrane proteins during membrane integration.

The protein localises to the cell inner membrane. Functionally, required for the insertion and/or proper folding and/or complex formation of integral membrane proteins into the membrane. Involved in integration of membrane proteins that insert both dependently and independently of the Sec translocase complex, as well as at least some lipoproteins. Aids folding of multispanning membrane proteins. The protein is Membrane protein insertase YidC of Rhizobium etli (strain CIAT 652).